A 699-amino-acid polypeptide reads, in one-letter code: DnaJ homolog subfamily C member 14 (699 aa).

A disordered region spans residues 1–230 (MAQKHPGEGG…RHRLGRKRSQ (230 aa)). Over residues 75 to 84 (HGPPRGPGPP) the composition is skewed to pro residues. The span at 86–102 (AEEDPDQSEASSEESGV) shows a compositional bias: acidic residues. Residues 117–133 (DGNSSFLSIPSTCNCQG) are compositionally biased toward polar residues. Residues 163-176 (GEDEELEGEYDEEE) show a composition bias toward acidic residues. A compositionally biased stretch (basic and acidic residues) spans 203–218 (PAKEDTREGGRRDPRS). Over residues 219 to 228 (PGRHRLGRKR) the composition is skewed to basic residues. The next 3 membrane-spanning stretches (helical) occupy residues 251–271 (AGFW…ETCG), 301–321 (GWAQ…AGLF), and 327–347 (LVGA…QLGW). The J domain maps to 444–508 (NPFHVLGVEA…ERRKEYEMKR (65 aa)). Positions 655 to 699 (MSNGNFFAAPQPGPGATAASKPNSTVPKGEAKPKRRKKVRRPFQR) are disordered. A compositionally biased stretch (low complexity) spans 662–673 (AAPQPGPGATAA). Over residues 687–699 (PKRRKKVRRPFQR) the composition is skewed to basic residues.

In terms of assembly, interacts with the FxxxFxxxF motif of DRD1 via its C-terminal domain. Interacts with pestivirus nonstructural protein NS2.

It localises to the endoplasmic reticulum membrane. Functionally, regulates the export of target proteins, such as DRD1, from the endoplasmic reticulum to the cell surface. Promotes cleavage of pestivirus polyprotein. The chain is DnaJ homolog subfamily C member 14 (DNAJC14) from Bos taurus (Bovine).